Consider the following 635-residue polypeptide: MAPAIRQLATGLLLALSWAPTTRADSSAADYYVKSLPGQPAGPPVKMHAGHIETDADHNGNLFFWHFENKHIAQRQRTVIWLNGGPGCSSEDGAMMEIGPYRVKGDQLVNNNGSWHEFANLLFVDNPVGTGFSYVDTNSYLHELDEMGDQFILFLEKFFKLFPQYAQDDLYFAGESYAGQHIPYIAKHILERNEKAGPDDQWNLKGLVIGNGWISPFEQYGSYLKFAYEKGLLAQGSEKAKQLEQQWKICRKQMAVDIKIDISECEAILQKILDVTATLTTSGKRNCYNMYDVRLKDTYPSCGMNWPPDLTDVTPYLRRKDVTEALHINAAKNTGWKECNGAVGSAFRAHKSKPSRDLLPDLLKKVPITLFSGAEDLICNHIGTEEMIGNMEWNGAKGFEVSPGNWAPRRDWTFEGKDAGFWQEARNLTYVLFKEASHMVPFDWPRRSRDMIDRVMKVDISAIGGEPTDSRIDGEKGPVTSVPPSKGSNNHPDTKPGGGDKGSSTNDDETQKQVDEAKWKAYYRSGEIVLVIVVIAAGLWGWYIWRDRRRRSGYQGVAGGDGAGPGHRAGARGLDRFQDRRTARDVETGDFDESELDDLHVETPREGPHKEAYAIGDDSDEEDIKGKGPERSGTR.

The N-terminal stretch at 1 to 24 is a signal peptide; it reads MAPAIRQLATGLLLALSWAPTTRA. Topologically, residues 25–524 are lumenal; sequence DSSAADYYVK…DEAKWKAYYR (500 aa). Asn112 is a glycosylation site (N-linked (GlcNAc...) asparagine). Catalysis depends on residues Ser176 and Asp376. Asn427 carries N-linked (GlcNAc...) asparagine glycosylation. His438 is an active-site residue. Residues 464 to 512 are disordered; the sequence is GGEPTDSRIDGEKGPVTSVPPSKGSNNHPDTKPGGGDKGSSTNDDETQK. Polar residues predominate over residues 482 to 491; the sequence is VPPSKGSNNH. Residues 525-545 traverse the membrane as a helical segment; sequence SGEIVLVIVVIAAGLWGWYIW. Residues 546-635 lie on the Cytoplasmic side of the membrane; sequence RDRRRRSGYQ…GKGPERSGTR (90 aa). Over residues 556-567 the composition is skewed to gly residues; it reads GVAGGDGAGPGH. The disordered stretch occupies residues 556 to 635; sequence GVAGGDGAGP…GKGPERSGTR (80 aa). Composition is skewed to basic and acidic residues over residues 573–587, 597–612, and 624–635; these read GLDR…RDVE, DDLH…HKEA, and IKGKGPERSGTR.

The protein belongs to the peptidase S10 family.

The protein localises to the golgi apparatus. Its subcellular location is the trans-Golgi network membrane. The enzyme catalyses Preferential release of a C-terminal arginine or lysine residue.. Functionally, protease with a carboxypeptidase B-like function involved in the C-terminal processing of the lysine and arginine residues from protein precursors. Promotes cell fusion and is involved in the programmed cell death. This Verticillium alfalfae (strain VaMs.102 / ATCC MYA-4576 / FGSC 10136) (Verticillium wilt of alfalfa) protein is Pheromone-processing carboxypeptidase KEX1 (KEX1).